Reading from the N-terminus, the 213-residue chain is Golgi apparatus membrane protein TVP23 homolog A (213 aa).

The next 4 membrane-spanning stretches (helical) occupy residues 32–52, 54–74, 123–143, and 150–170; these read PLATFFHLFFRVSAIVTYVSC, WFSKSFVGCFVMVLLLLSLDF, IFWLGLIICPMIWIVFFFSTL, and WLALVVAGISLQAANLYGYIL.

Belongs to the TVP23 family.

It is found in the membrane. The chain is Golgi apparatus membrane protein TVP23 homolog A (TVP23A) from Homo sapiens (Human).